Consider the following 515-residue polypeptide: 1-pyrroline-5-carboxylate dehydrogenase (515 aa).

Residues Glu286 and Cys320 contribute to the active site.

It belongs to the aldehyde dehydrogenase family. RocA subfamily.

The enzyme catalyses L-glutamate 5-semialdehyde + NAD(+) + H2O = L-glutamate + NADH + 2 H(+). Its pathway is amino-acid degradation; L-proline degradation into L-glutamate; L-glutamate from L-proline: step 2/2. In Bacillus pumilus (strain SAFR-032), this protein is 1-pyrroline-5-carboxylate dehydrogenase.